The chain runs to 234 residues: MSETWEALRKKARSTENSIDVKLVSLNKLTASSHGGFDIDEKTVSSRQTTFRTVTTEIEGLIEQLTNINDDMNDVAGAQSSASWASNPAIQHTLRRHREILRDYGSEYRRARDNVDQVLQRELLLSSSNNESRNPAVNNRARGYDMYLKENDHINACDRLLDEQIEMAMSTKENVARQGINLRGISNRLHYITKKYPAINNLMQKIKTKKQKNTMILAGVISACLIFTIFWIIN.

Topologically, residues 1-212 (MSETWEALRK…MQKIKTKKQK (212 aa)) are cytoplasmic. Positions 54-121 (VTTEIEGLIE…RDNVDQVLQR (68 aa)) form a coiled coil. Residues 213-233 (NTMILAGVISACLIFTIFWII) traverse the membrane as a helical; Anchor for type IV membrane protein segment. Position 234 (Asn-234) is a topological domain, vesicular.

The protein belongs to the GOSR1 family. Component of several multiprotein Golgi SNARE complexes.

It localises to the golgi apparatus membrane. Involved in transport from the ER to the Golgi apparatus as well as in intra-Golgi transport. It belongs to a super-family of proteins called t-SNAREs or soluble NSF (N-ethylmaleimide-sensitive factor) attachment protein receptor. Cooperates with ykt-6 for proper expression of Golgi-resident proteins. Required along with ykt-6 for normal embryonic development, seam cell division or differentiation, and ray formation. The protein is Golgi SNAP receptor complex member 1 of Caenorhabditis briggsae.